Here is a 327-residue protein sequence, read N- to C-terminus: Ferrochelatase 2 (327 aa).

2 residues coordinate Fe cation: H201 and E282.

Belongs to the ferrochelatase family.

It is found in the cytoplasm. It catalyses the reaction heme b + 2 H(+) = protoporphyrin IX + Fe(2+). It functions in the pathway porphyrin-containing compound metabolism; protoheme biosynthesis; protoheme from protoporphyrin-IX: step 1/1. Its function is as follows. Catalyzes the ferrous insertion into protoporphyrin IX. The protein is Ferrochelatase 2 of Shewanella oneidensis (strain ATCC 700550 / JCM 31522 / CIP 106686 / LMG 19005 / NCIMB 14063 / MR-1).